We begin with the raw amino-acid sequence, 339 residues long: Protein pelota homolog (339 aa).

Belongs to the eukaryotic release factor 1 family. Pelota subfamily. In terms of assembly, monomer. It depends on a divalent metal cation as a cofactor.

Its subcellular location is the cytoplasm. In terms of biological role, may function in recognizing stalled ribosomes, interact with stem-loop structures in stalled mRNA molecules, and effect endonucleolytic cleavage of the mRNA. May play a role in the release non-functional ribosomes and degradation of damaged mRNAs. Has endoribonuclease activity. In Picrophilus torridus (strain ATCC 700027 / DSM 9790 / JCM 10055 / NBRC 100828 / KAW 2/3), this protein is Protein pelota homolog.